A 468-amino-acid polypeptide reads, in one-letter code: Glutathione reductase (468 aa).

Positions 17 and 18 each coordinate FAD. Glutathione is bound at residue serine 17. Arginine 24 contributes to the glutathione binding site. Residues glutamate 38, threonine 45, cysteine 46, and lysine 54 each contribute to the FAD site. The cysteines at positions 46 and 51 are disulfide-linked. Residue tyrosine 103 coordinates glutathione. Alanine 119 is a binding site for FAD. Residues alanine 185, isoleucine 188, glutamate 191, arginine 208, arginine 214, and glycine 276 each contribute to the NADP(+) site. Aspartate 317 is a binding site for FAD. Residue glutamate 323 participates in NADP(+) binding. Threonine 325 lines the FAD pocket. Residue arginine 333 participates in glutathione binding. NADP(+) is bound at residue valine 358. Position 410 (lysine 410) interacts with glutathione. Histidine 457 provides a ligand contact to FAD. Histidine 457 serves as the catalytic Proton acceptor.

Belongs to the class-I pyridine nucleotide-disulfide oxidoreductase family. Homodimer. FAD is required as a cofactor.

It localises to the cytoplasm. The protein localises to the mitochondrion. It carries out the reaction 2 glutathione + NADP(+) = glutathione disulfide + NADPH + H(+). Functionally, catalyzes the reduction of glutathione disulfide (GSSG) to reduced glutathione (GSH). Constitutes the major mechanism to maintain a high GSH:GSSG ratio in the cytosol. This is Glutathione reductase (gtr-1) from Neurospora crassa (strain ATCC 24698 / 74-OR23-1A / CBS 708.71 / DSM 1257 / FGSC 987).